The sequence spans 505 residues: SusD-like protein P2 (505 aa).

Positions 1 to 17 are cleaved as a signal peptide; that stretch reads MKKYKITFIVLLLTLVG. A lipid anchor (N-palmitoyl cysteine) is attached at Cys18. The S-diacylglycerol cysteine moiety is linked to residue Cys18.

This sequence belongs to the SusD family.

It is found in the cell outer membrane. Polysaccharide-binding protein probably involved in ulvan degradation. Ulvan is the main polysaccharide component of the Ulvales (green seaweed) cell wall. It is composed of disaccharide building blocks comprising 3-sulfated rhamnose (Rha3S) linked to D-glucuronic acid (GlcA), L-iduronic acid (IduA), or D-xylose (Xyl). The SusD-like protein may mediate ulvan oligomer-binding before transport in the periplasm for further degradation. This Formosa agariphila (strain DSM 15362 / KCTC 12365 / LMG 23005 / KMM 3901 / M-2Alg 35-1) protein is SusD-like protein P2.